The sequence spans 505 residues: ATP synthase subunit alpha, chloroplastic (505 aa).

Residue 170–177 (GDRQTGKT) coordinates ATP.

This sequence belongs to the ATPase alpha/beta chains family. In terms of assembly, F-type ATPases have 2 components, CF(1) - the catalytic core - and CF(0) - the membrane proton channel. CF(1) has five subunits: alpha(3), beta(3), gamma(1), delta(1), epsilon(1). CF(0) has four main subunits: a, b, b' and c.

It is found in the plastid. The protein resides in the chloroplast thylakoid membrane. The enzyme catalyses ATP + H2O + 4 H(+)(in) = ADP + phosphate + 5 H(+)(out). Its function is as follows. Produces ATP from ADP in the presence of a proton gradient across the membrane. The alpha chain is a regulatory subunit. In Mesostigma viride (Green alga), this protein is ATP synthase subunit alpha, chloroplastic.